Consider the following 366-residue polypeptide: Ubiquitin carboxyl-terminal hydrolase 46 (366 aa).

Residues 35–365 form the USP domain; that stretch reads FGLVNFGNTC…SGYILFYQSR (331 aa). The Nucleophile role is filled by C44. Residues C182, C185, C229, and C232 each contribute to the Zn(2+) site. Catalysis depends on H313, which acts as the Proton acceptor.

It belongs to the peptidase C19 family. USP12/USP46 subfamily. As to quaternary structure, interacts with WDR48. Interacts with WDR20. Interacts with DMWD. Component of the USP46/WDR20/WDR48 deubiquitinating complex. Broadly expressed.

It localises to the cytoplasm. The enzyme catalyses Thiol-dependent hydrolysis of ester, thioester, amide, peptide and isopeptide bonds formed by the C-terminal Gly of ubiquitin (a 76-residue protein attached to proteins as an intracellular targeting signal).. Its activity is regulated as follows. Activated by interaction with WDR48. Functionally, deubiquitinating enzyme that plays a role in behavior, possibly by regulating GABA action. May act by mediating the deubiquitination of GAD1/GAD67. Has almost no deubiquitinating activity by itself and requires the interaction with WDR48 to have a high activity. Not involved in deubiquitination of monoubiquitinated FANCD2. In Homo sapiens (Human), this protein is Ubiquitin carboxyl-terminal hydrolase 46 (USP46).